The primary structure comprises 467 residues: Glutamate--tRNA ligase (467 aa).

The short motif at P15 to G25 is the 'HIGH' region element. The 'KMSKS' region motif lies at K249 to R253. Residue K252 participates in ATP binding.

It belongs to the class-I aminoacyl-tRNA synthetase family. Glutamate--tRNA ligase type 1 subfamily. Monomer.

The protein localises to the cytoplasm. The enzyme catalyses tRNA(Glu) + L-glutamate + ATP = L-glutamyl-tRNA(Glu) + AMP + diphosphate. Catalyzes the attachment of glutamate to tRNA(Glu) in a two-step reaction: glutamate is first activated by ATP to form Glu-AMP and then transferred to the acceptor end of tRNA(Glu). The sequence is that of Glutamate--tRNA ligase from Coprothermobacter proteolyticus (strain ATCC 35245 / DSM 5265 / OCM 4 / BT).